Reading from the N-terminus, the 551-residue chain is Glucans biosynthesis protein D (551 aa).

The tat-type signal signal peptide spans 1–32 (MDRRRFIKGSMAMAAVCGTSGIASLFSQAAFA).

Belongs to the OpgD/OpgG family. Predicted to be exported by the Tat system. The position of the signal peptide cleavage has not been experimentally proven.

Its subcellular location is the periplasm. It functions in the pathway glycan metabolism; osmoregulated periplasmic glucan (OPG) biosynthesis. Functionally, probably involved in the control of the structural glucose backbone of osmoregulated periplasmic glucans (OPGs). The protein is Glucans biosynthesis protein D (mdoD) of Shigella flexneri.